Here is a 371-residue protein sequence, read N- to C-terminus: Ferrochelatase (371 aa).

H218 and E299 together coordinate Fe cation.

The protein belongs to the ferrochelatase family.

The protein localises to the cytoplasm. The catalysed reaction is heme b + 2 H(+) = protoporphyrin IX + Fe(2+). It participates in porphyrin-containing compound metabolism; protoheme biosynthesis; protoheme from protoporphyrin-IX: step 1/1. Functionally, catalyzes the ferrous insertion into protoporphyrin IX. This is Ferrochelatase from Cupriavidus pinatubonensis (strain JMP 134 / LMG 1197) (Cupriavidus necator (strain JMP 134)).